Here is a 265-residue protein sequence, read N- to C-terminus: tRNA pseudouridine synthase A (265 aa).

D52 acts as the Nucleophile in catalysis. Y112 contacts substrate.

Belongs to the tRNA pseudouridine synthase TruA family. As to quaternary structure, homodimer.

It carries out the reaction uridine(38/39/40) in tRNA = pseudouridine(38/39/40) in tRNA. In terms of biological role, formation of pseudouridine at positions 38, 39 and 40 in the anticodon stem and loop of transfer RNAs. The sequence is that of tRNA pseudouridine synthase A from Akkermansia muciniphila (strain ATCC BAA-835 / DSM 22959 / JCM 33894 / BCRC 81048 / CCUG 64013 / CIP 107961 / Muc).